We begin with the raw amino-acid sequence, 106 residues long: Large ribosomal subunit protein uL24 (106 aa).

The protein belongs to the universal ribosomal protein uL24 family. As to quaternary structure, part of the 50S ribosomal subunit.

Functionally, one of two assembly initiator proteins, it binds directly to the 5'-end of the 23S rRNA, where it nucleates assembly of the 50S subunit. One of the proteins that surrounds the polypeptide exit tunnel on the outside of the subunit. This chain is Large ribosomal subunit protein uL24, found in Gluconobacter oxydans (strain 621H) (Gluconobacter suboxydans).